The chain runs to 302 residues: Ornithine carbamoyltransferase (302 aa).

Carbamoyl phosphate contacts are provided by residues 52-55 (STRT), Gln-79, Arg-103, and 130-133 (HPCQ). L-ornithine contacts are provided by residues Asn-161, Asp-222, and 226–227 (SM). Carbamoyl phosphate contacts are provided by residues 262 to 263 (CL) and Arg-290.

It belongs to the aspartate/ornithine carbamoyltransferase superfamily. OTCase family.

It localises to the cytoplasm. The catalysed reaction is carbamoyl phosphate + L-ornithine = L-citrulline + phosphate + H(+). It participates in amino-acid biosynthesis; L-arginine biosynthesis; L-arginine from L-ornithine and carbamoyl phosphate: step 1/3. Reversibly catalyzes the transfer of the carbamoyl group from carbamoyl phosphate (CP) to the N(epsilon) atom of ornithine (ORN) to produce L-citrulline. The sequence is that of Ornithine carbamoyltransferase from Syntrophus aciditrophicus (strain SB).